A 76-amino-acid polypeptide reads, in one-letter code: Exodeoxyribonuclease 7 small subunit (76 aa).

This sequence belongs to the XseB family. In terms of assembly, heterooligomer composed of large and small subunits.

Its subcellular location is the cytoplasm. It carries out the reaction Exonucleolytic cleavage in either 5'- to 3'- or 3'- to 5'-direction to yield nucleoside 5'-phosphates.. Bidirectionally degrades single-stranded DNA into large acid-insoluble oligonucleotides, which are then degraded further into small acid-soluble oligonucleotides. This Bacillus cytotoxicus (strain DSM 22905 / CIP 110041 / 391-98 / NVH 391-98) protein is Exodeoxyribonuclease 7 small subunit.